Reading from the N-terminus, the 84-residue chain is Small ribosomal subunit protein bS16c (84 aa).

The protein belongs to the bacterial ribosomal protein bS16 family.

It localises to the plastid. Its subcellular location is the chloroplast. This chain is Small ribosomal subunit protein bS16c, found in Mesostigma viride (Green alga).